We begin with the raw amino-acid sequence, 271 residues long: Thiosulfate sulfurtransferase (271 aa).

2 consecutive Rhodanese domains span residues 21–129 (SAPE…PLSR) and 159–270 (GAAD…TPVE). Cys230 functions as the Cysteine persulfide intermediate in the catalytic mechanism. Residue Arg235 coordinates substrate.

The protein localises to the cytoplasm. It carries out the reaction thiosulfate + hydrogen cyanide = thiocyanate + sulfite + 2 H(+). The sequence is that of Thiosulfate sulfurtransferase (rhdA) from Azotobacter vinelandii.